We begin with the raw amino-acid sequence, 130 residues long: Small ribosomal subunit protein eS8 (130 aa).

This sequence belongs to the eukaryotic ribosomal protein eS8 family. As to quaternary structure, part of the 30S ribosomal subunit.

The protein is Small ribosomal subunit protein eS8 of Ignicoccus hospitalis (strain KIN4/I / DSM 18386 / JCM 14125).